The following is a 671-amino-acid chain: DNA ligase (671 aa).

NAD(+) contacts are provided by residues D32–D36, S81–L82, and E114. Catalysis depends on K116, which acts as the N6-AMP-lysine intermediate. Residues R137, E175, K292, and K316 each contribute to the NAD(+) site. Zn(2+) is bound by residues C410, C413, C428, and C434. The region spanning E592–R671 is the BRCT domain.

Belongs to the NAD-dependent DNA ligase family. LigA subfamily. Mg(2+) is required as a cofactor. Mn(2+) serves as cofactor.

It catalyses the reaction NAD(+) + (deoxyribonucleotide)n-3'-hydroxyl + 5'-phospho-(deoxyribonucleotide)m = (deoxyribonucleotide)n+m + AMP + beta-nicotinamide D-nucleotide.. In terms of biological role, DNA ligase that catalyzes the formation of phosphodiester linkages between 5'-phosphoryl and 3'-hydroxyl groups in double-stranded DNA using NAD as a coenzyme and as the energy source for the reaction. It is essential for DNA replication and repair of damaged DNA. This is DNA ligase from Baumannia cicadellinicola subsp. Homalodisca coagulata.